The primary structure comprises 203 residues: Proteasome subunit beta 2 (203 aa).

Positions 1 to 9 are cleaved as a propeptide — removed in mature form; by autocatalysis; that stretch reads MGEEVSIGA. T10 (nucleophile) is an active-site residue.

Belongs to the peptidase T1B family. As to quaternary structure, the 20S proteasome core is composed of 14 alpha and 14 beta subunits that assemble into four stacked heptameric rings, resulting in a barrel-shaped structure. The two inner rings, each composed of seven catalytic beta subunits, are sandwiched by two outer rings, each composed of seven alpha subunits. The catalytic chamber with the active sites is on the inside of the barrel. Has a gated structure, the ends of the cylinder being occluded by the N-termini of the alpha-subunits. Is capped at one or both ends by the proteasome regulatory ATPase, PAN.

It localises to the cytoplasm. The enzyme catalyses Cleavage of peptide bonds with very broad specificity.. Its activity is regulated as follows. The formation of the proteasomal ATPase PAN-20S proteasome complex, via the docking of the C-termini of PAN into the intersubunit pockets in the alpha-rings, triggers opening of the gate for substrate entry. Interconversion between the open-gate and close-gate conformations leads to a dynamic regulation of the 20S proteasome proteolysis activity. Functionally, component of the proteasome core, a large protease complex with broad specificity involved in protein degradation. The protein is Proteasome subunit beta 2 of Pyrobaculum calidifontis (strain DSM 21063 / JCM 11548 / VA1).